Here is a 459-residue protein sequence, read N- to C-terminus: Serine permease SerP1 (459 aa).

12 helical membrane passes run 19–39 (IQLIAIAGTIGTGLFLGAGKT), 42–62 (MTGPSVIFAYILIGIAMFFFL), 97–117 (SYWLVIVFVCISELTAIGTYI), 119–139 (FWLPHLPLWLIEIVMLALLFG), 153–173 (FWFAMIKVAAILGMIVTAIIL), 212–232 (FVGALQMVMFAFTSMEFIGMT), 254–274 (ILLFYVGALLAIMAIFNWHYI), 281–301 (FVIVFQLIGIKWAAALINFVV), 341–361 (AGIPINALYMATALSLLAPVL), 370–390 (AFNFAASCTTNLFLVVYFITL), 412–432 (PTIAVPFIAIIFAIVFASLFF), and 436–456 (TFYPALGAIVWTLIFGLYSHF).

The protein belongs to the amino acid-polyamine-organocation (APC) superfamily. Amino acid transporter (AAT) (TC 2.A.3.1) family.

The protein resides in the cell membrane. Its function is as follows. Transports L-serine, L-threonine and L-cysteine with high affinity. Stereoselective, with a strong preference for L-serine. Is the main L-serine transporter and is responsible for optimal growth in media containing free amino acids as the sole source of amino acids. Is also the main transporter for L-threonine. The protein is Serine permease SerP1 of Lactococcus lactis subsp. cremoris (strain MG1363).